A 309-amino-acid polypeptide reads, in one-letter code: UPF0282 protein Saci_0277 (309 aa).

It belongs to the UPF0282 family.

This chain is UPF0282 protein Saci_0277, found in Sulfolobus acidocaldarius (strain ATCC 33909 / DSM 639 / JCM 8929 / NBRC 15157 / NCIMB 11770).